The chain runs to 228 residues: MDQNALKALVGQEAVKYVEDGMILGIGTGSTVRYMIDALGERVKNEGLHIIGVATSDRSAKQAESLGITIKELDEVDHLDLTIDGADEIDDNFQGIKGGGAAHLWEKIVAINSTKNMWIVDESKMVHHLGAFPLPLEVIPFGSSHVLEKLNKMGFNPSFRMTDTGEHVLTDSKNYIIDLHLGRIDHPHDLANTLNGIVGVVEHGLFLDTVNTVIVGRQDGPEVLNARD.

Substrate contacts are provided by residues 28–31, 84–87, and 97–100; these read TGST, DGAD, and KGGG. E106 (proton acceptor) is an active-site residue. Substrate is bound at residue K124.

Belongs to the ribose 5-phosphate isomerase family. As to quaternary structure, homodimer.

The enzyme catalyses aldehydo-D-ribose 5-phosphate = D-ribulose 5-phosphate. Its pathway is carbohydrate degradation; pentose phosphate pathway; D-ribose 5-phosphate from D-ribulose 5-phosphate (non-oxidative stage): step 1/1. Its function is as follows. Catalyzes the reversible conversion of ribose-5-phosphate to ribulose 5-phosphate. The sequence is that of Ribose-5-phosphate isomerase A from Levilactobacillus brevis (strain ATCC 367 / BCRC 12310 / CIP 105137 / JCM 1170 / LMG 11437 / NCIMB 947 / NCTC 947) (Lactobacillus brevis).